The chain runs to 384 residues: Chaperone protein DnaJ (384 aa).

The 65-residue stretch at 5–69 folds into the J domain; that stretch reads DYYKVLGVDR…QKRAQYDQFG (65 aa). The segment at 141–223 adopts a CR-type zinc-finger fold; that stretch reads GKKTQVSYTR…CGGKGTVERK (83 aa). The Zn(2+) site is built by cysteine 154, cysteine 157, cysteine 171, cysteine 174, cysteine 197, cysteine 200, cysteine 211, and cysteine 214. CXXCXGXG motif repeat units lie at residues 154–161, 171–178, 197–204, and 211–218; these read CETCGGNG, CDKCHGTG, CDKCNGRG, and CKTCGGKG.

The protein belongs to the DnaJ family. As to quaternary structure, homodimer. Requires Zn(2+) as cofactor.

The protein localises to the cytoplasm. Participates actively in the response to hyperosmotic and heat shock by preventing the aggregation of stress-denatured proteins and by disaggregating proteins, also in an autonomous, DnaK-independent fashion. Unfolded proteins bind initially to DnaJ; upon interaction with the DnaJ-bound protein, DnaK hydrolyzes its bound ATP, resulting in the formation of a stable complex. GrpE releases ADP from DnaK; ATP binding to DnaK triggers the release of the substrate protein, thus completing the reaction cycle. Several rounds of ATP-dependent interactions between DnaJ, DnaK and GrpE are required for fully efficient folding. Also involved, together with DnaK and GrpE, in the DNA replication of plasmids through activation of initiation proteins. The sequence is that of Chaperone protein DnaJ from Lactobacillus acidophilus (strain ATCC 700396 / NCK56 / N2 / NCFM).